We begin with the raw amino-acid sequence, 467 residues long: Neutral protease 2 homolog NFIA_031120 (467 aa).

The N-terminal stretch at 1–19 (MKITALASAILAVVHGALA) is a signal peptide. The propeptide occupies 20-172 (LPARAPALDI…PASIKPLDRR (153 aa)). 2 disulfides stabilise this stretch: C179–C251 and C258–C276. Residue H300 participates in Zn(2+) binding. Residue E301 is part of the active site. The Zn(2+) site is built by H304 and D315. Residues 359–451 (WDGNSQPGQT…TMWDGSSEPG (93 aa)) are compositionally biased toward polar residues. The interval 359-467 (WDGNSQPGQT…HTTWGNFYQA (109 aa)) is disordered.

This sequence belongs to the peptidase M35 family. Requires Zn(2+) as cofactor.

It localises to the secreted. It catalyses the reaction Preferential cleavage of bonds with hydrophobic residues in P1'. Also 3-Asn-|-Gln-4 and 8-Gly-|-Ser-9 bonds in insulin B chain.. Functionally, secreted metalloproteinase that allows assimilation of proteinaceous substrates. Shows high activities on basic nuclear substrates such as histone and protamine. In Neosartorya fischeri (strain ATCC 1020 / DSM 3700 / CBS 544.65 / FGSC A1164 / JCM 1740 / NRRL 181 / WB 181) (Aspergillus fischerianus), this protein is Neutral protease 2 homolog NFIA_031120.